Consider the following 156-residue polypeptide: Small ribosomal subunit protein uS7 (156 aa).

This sequence belongs to the universal ribosomal protein uS7 family. In terms of assembly, part of the 30S ribosomal subunit. Contacts proteins S9 and S11.

One of the primary rRNA binding proteins, it binds directly to 16S rRNA where it nucleates assembly of the head domain of the 30S subunit. Is located at the subunit interface close to the decoding center, probably blocks exit of the E-site tRNA. This is Small ribosomal subunit protein uS7 from Streptococcus suis (strain 98HAH33).